Here is a 168-residue protein sequence, read N- to C-terminus: MIFIDNRQNKFEVTEELTKKLEEVISFVLKEEKVKEDCEVSLVFVDNEEIRGINNETRGIDRATDVLSFPMIDYPEDKVYKDVYLEHEFDKCYFDGDELILGDIVLSLERTKEQSIEFNHSFEREACYLVTHSVLHLLGYDHMEEEEKARMRGREEELLGKLNITRES.

Residues His132, His136, and His142 each coordinate Zn(2+).

This sequence belongs to the endoribonuclease YbeY family. Zn(2+) serves as cofactor.

Its subcellular location is the cytoplasm. Single strand-specific metallo-endoribonuclease involved in late-stage 70S ribosome quality control and in maturation of the 3' terminus of the 16S rRNA. The sequence is that of Endoribonuclease YbeY from Clostridium perfringens (strain ATCC 13124 / DSM 756 / JCM 1290 / NCIMB 6125 / NCTC 8237 / Type A).